The primary structure comprises 162 residues: uncharacterized protein (162 aa).

The protein belongs to the baculoviridae 19 kDa protein family.

This is an uncharacterized protein from Tortricidae (ClGV).